The sequence spans 316 residues: Glucan endo-1,3-beta-glucosidase GV (316 aa).

Catalysis depends on Glu-99, which acts as the Proton donor. Glu-239 serves as the catalytic Nucleophile.

It belongs to the glycosyl hydrolase 17 family.

Its subcellular location is the cytoplasm. The catalysed reaction is Hydrolysis of (1-&gt;3)-beta-D-glucosidic linkages in (1-&gt;3)-beta-D-glucans.. In terms of biological role, may provide a degree of protection against microbial invasion of germinated barley grain through its ability to degrade fungal cell wall polysaccharides. The protein is Glucan endo-1,3-beta-glucosidase GV of Hordeum vulgare (Barley).